We begin with the raw amino-acid sequence, 280 residues long: Ribosomal RNA large subunit methyltransferase J (280 aa).

Residues His19, His42, Ser100, Glu118, 143 to 144, and Asp164 each bind S-adenosyl-L-methionine; that span reads DG. Asp164 serves as the catalytic Proton acceptor.

It belongs to the RlmJ family. Monomer.

It carries out the reaction adenosine(2030) in 23S rRNA + S-adenosyl-L-methionine = N(6)-methyladenosine(2030) in 23S rRNA + S-adenosyl-L-homocysteine + H(+). Its function is as follows. Specifically methylates the adenine in position 2030 of 23S rRNA. Nascent 23S rRNA seems to be the natural substrate. Appears to be not necessary for ribosome assembly. Required for the utilization of extracellular DNA as the sole source of carbon and energy. The sequence is that of Ribosomal RNA large subunit methyltransferase J from Escherichia coli (strain K12).